An 86-amino-acid polypeptide reads, in one-letter code: MLSQKTKKKHNFLNHGLSLNLVIKPYLALEGSVAFPAENGVQDTESTLEKRETGDEENSAKFPIGRRDFDTLRCMLGRVYQRCWQV.

The segment at 31 to 49 (GSVAFPAENGVQDTESTLE) is NGE-like. Residues 40-60 (GVQDTESTLEKRETGDEENSA) are disordered. Positions 52-64 (ETGDEENSAKFPI) are NEI-like. The tract at residues 68 to 86 (DFDTLRCMLGRVYQRCWQV) is melanin-concentrating hormone-like.

Belongs to the melanin-concentrating hormone family. In terms of tissue distribution, expressed in testis but not in brain.

This Homo sapiens (Human) protein is Putative pro-MCH-like protein 2 (PMCHL2).